Consider the following 81-residue polypeptide: MIKSFQLSFTVLIVFTVLILGVVGNVEQKSQDWCWSIVNKDRCLQKECESLCSKKHPKGKFMCIPSTPGGPFQCHCRHPCR.

The N-terminal stretch at 1–24 (MIKSFQLSFTVLIVFTVLILGVVG) is a signal peptide. Disulfide bonds link Cys34/Cys80, Cys43/Cys63, Cys48/Cys74, and Cys52/Cys76.

This sequence belongs to the DEFL family.

It localises to the secreted. This chain is Putative defensin-like protein 148 (LCR4), found in Arabidopsis thaliana (Mouse-ear cress).